We begin with the raw amino-acid sequence, 187 residues long: Ethylene-responsive transcription factor ERF015 (187 aa).

Positions 26–83 (CYRGVRKRSWGKWVSEIRVPKTGRRIWLGSYDAPEKAARAYDAALFCIRGEKGVYNFP) form a DNA-binding region, AP2/ERF.

This sequence belongs to the AP2/ERF transcription factor family. ERF subfamily.

It is found in the nucleus. Functionally, probably acts as a transcriptional activator. Binds to the GCC-box pathogenesis-related promoter element. May be involved in the regulation of gene expression by stress factors and by components of stress signal transduction pathways. The chain is Ethylene-responsive transcription factor ERF015 (ERF015) from Arabidopsis thaliana (Mouse-ear cress).